Consider the following 86-residue polypeptide: RNA-binding protein Hfq (86 aa).

Positions 9-68 (DPYLNTLRKEKVPVSIYLVNGIKLQGSIESFDQFVVLLKNTVSQMVYKHAISTVVPARPV) constitute a Sm domain. Residues 66–86 (RPVRLPSPTDSEHGDSEPGNA) are disordered. Residues 75 to 86 (DSEHGDSEPGNA) are compositionally biased toward basic and acidic residues.

This sequence belongs to the Hfq family. As to quaternary structure, homohexamer.

In terms of biological role, RNA chaperone that binds small regulatory RNA (sRNAs) and mRNAs to facilitate mRNA translational regulation in response to envelope stress, environmental stress and changes in metabolite concentrations. Also binds with high specificity to tRNAs. The sequence is that of RNA-binding protein Hfq from Pseudomonas putida (strain ATCC 700007 / DSM 6899 / JCM 31910 / BCRC 17059 / LMG 24140 / F1).